The following is a 532-amino-acid chain: Probable NAD kinase 1 (532 aa).

Residues 1 to 26 (MSLDELPHKVSDERVNHDTVTSHESE) are compositionally biased toward basic and acidic residues. The interval 1 to 32 (MSLDELPHKVSDERVNHDTVTSHESEIGSGSI) is disordered.

Belongs to the NAD kinase family.

The catalysed reaction is NAD(+) + ATP = ADP + NADP(+) + H(+). The chain is Probable NAD kinase 1 from Oryza sativa subsp. japonica (Rice).